Consider the following 72-residue polypeptide: Putative snRNP Sm-like protein (72 aa).

The Sm domain occupies 4–72 (RPLDILNDAL…RGDNVVYVSP (69 aa)).

This sequence belongs to the snRNP Sm proteins family.

In Methanococcoides burtonii (strain DSM 6242 / NBRC 107633 / OCM 468 / ACE-M), this protein is Putative snRNP Sm-like protein.